A 170-amino-acid polypeptide reads, in one-letter code: Peptide deformylase (170 aa).

Fe cation contacts are provided by Cys91 and His133. The active site involves Glu134. His137 serves as a coordination point for Fe cation.

Belongs to the polypeptide deformylase family. The cofactor is Fe(2+).

It catalyses the reaction N-terminal N-formyl-L-methionyl-[peptide] + H2O = N-terminal L-methionyl-[peptide] + formate. Removes the formyl group from the N-terminal Met of newly synthesized proteins. Requires at least a dipeptide for an efficient rate of reaction. N-terminal L-methionine is a prerequisite for activity but the enzyme has broad specificity at other positions. The sequence is that of Peptide deformylase from Histophilus somni (strain 129Pt) (Haemophilus somnus).